The following is a 431-amino-acid chain: Adenylosuccinate synthetase (431 aa).

GTP-binding positions include 12–18 (GDEGKGK) and 40–42 (GHT). Aspartate 13 (proton acceptor) is an active-site residue. Residues aspartate 13 and glycine 40 each contribute to the Mg(2+) site. Residues 13 to 16 (DEGK), 38 to 41 (NAGH), threonine 131, arginine 145, glutamine 225, threonine 240, and arginine 304 contribute to the IMP site. The Proton donor role is filled by histidine 41. Position 300–306 (300–306 (TTTGRKR)) interacts with substrate. GTP-binding positions include arginine 306, 332–334 (KLD), and 414–416 (STS).

This sequence belongs to the adenylosuccinate synthetase family. Homodimer. Mg(2+) is required as a cofactor.

Its subcellular location is the cytoplasm. It catalyses the reaction IMP + L-aspartate + GTP = N(6)-(1,2-dicarboxyethyl)-AMP + GDP + phosphate + 2 H(+). It functions in the pathway purine metabolism; AMP biosynthesis via de novo pathway; AMP from IMP: step 1/2. Plays an important role in the de novo pathway of purine nucleotide biosynthesis. Catalyzes the first committed step in the biosynthesis of AMP from IMP. The sequence is that of Adenylosuccinate synthetase from Jannaschia sp. (strain CCS1).